An 880-amino-acid polypeptide reads, in one-letter code: Leucine--tRNA ligase (880 aa).

A 'HIGH' region motif is present at residues 46–56 (PYPSGALHMGH). Positions 638 to 642 (KMSKS) match the 'KMSKS' region motif. Lysine 641 provides a ligand contact to ATP.

Belongs to the class-I aminoacyl-tRNA synthetase family.

The protein localises to the cytoplasm. It carries out the reaction tRNA(Leu) + L-leucine + ATP = L-leucyl-tRNA(Leu) + AMP + diphosphate. This is Leucine--tRNA ligase from Xanthomonas euvesicatoria pv. vesicatoria (strain 85-10) (Xanthomonas campestris pv. vesicatoria).